Consider the following 265-residue polypeptide: Cytosolic Fe-S cluster assembly factor NUBP2 homolog (265 aa).

22-29 (GKGGVGKS) contributes to the ATP binding site. 2 residues coordinate [4Fe-4S] cluster: cysteine 196 and cysteine 199.

The protein belongs to the Mrp/NBP35 ATP-binding proteins family. NUBP2/CFD1 subfamily. In terms of assembly, heterotetramer of 2 NUBP1 and 2 NUBP2 chains. Requires [4Fe-4S] cluster as cofactor.

The protein localises to the cytoplasm. Its function is as follows. Component of the cytosolic iron-sulfur (Fe/S) protein assembly (CIA) machinery. Required for maturation of extramitochondrial Fe-S proteins. The NUBP1-NUBP2 heterotetramer forms a Fe-S scaffold complex, mediating the de novo assembly of an Fe-S cluster and its transfer to target apoproteins. This is Cytosolic Fe-S cluster assembly factor NUBP2 homolog from Trichoplax adhaerens (Trichoplax reptans).